A 264-amino-acid chain; its full sequence is Tryptophan synthase alpha chain (264 aa).

Residues E45 and D56 each act as proton acceptor in the active site.

It belongs to the TrpA family. Tetramer of two alpha and two beta chains.

The catalysed reaction is (1S,2R)-1-C-(indol-3-yl)glycerol 3-phosphate + L-serine = D-glyceraldehyde 3-phosphate + L-tryptophan + H2O. It functions in the pathway amino-acid biosynthesis; L-tryptophan biosynthesis; L-tryptophan from chorismate: step 5/5. Its function is as follows. The alpha subunit is responsible for the aldol cleavage of indoleglycerol phosphate to indole and glyceraldehyde 3-phosphate. The chain is Tryptophan synthase alpha chain from Leptospira borgpetersenii serovar Hardjo-bovis (strain JB197).